The primary structure comprises 455 residues: Kynurenine 3-monooxygenase (455 aa).

This sequence belongs to the aromatic-ring hydroxylase family. KMO subfamily. It depends on FAD as a cofactor.

It carries out the reaction L-kynurenine + NADPH + O2 + H(+) = 3-hydroxy-L-kynurenine + NADP(+) + H2O. It participates in cofactor biosynthesis; NAD(+) biosynthesis; quinolinate from L-kynurenine: step 1/3. Functionally, catalyzes the hydroxylation of L-kynurenine (L-Kyn) to form 3-hydroxy-L-kynurenine (L-3OHKyn). Required for synthesis of quinolinic acid. In Xanthomonas oryzae pv. oryzae (strain PXO99A), this protein is Kynurenine 3-monooxygenase.